We begin with the raw amino-acid sequence, 239 residues long: Orotidine 5'-phosphate decarboxylase (239 aa).

Substrate is bound by residues aspartate 10, lysine 32, 59-68 (DLKLHDIPNT), threonine 122, arginine 184, glutamine 193, glycine 213, and arginine 214. The active-site Proton donor is the lysine 61.

The protein belongs to the OMP decarboxylase family. Type 1 subfamily. Homodimer.

The enzyme catalyses orotidine 5'-phosphate + H(+) = UMP + CO2. The protein operates within pyrimidine metabolism; UMP biosynthesis via de novo pathway; UMP from orotate: step 2/2. In terms of biological role, catalyzes the decarboxylation of orotidine 5'-monophosphate (OMP) to uridine 5'-monophosphate (UMP). In Geobacillus thermodenitrificans (strain NG80-2), this protein is Orotidine 5'-phosphate decarboxylase.